A 93-amino-acid chain; its full sequence is Progonadoliberin-2 (93 aa).

Residues Met-1–Gly-24 form the signal peptide. Gln-25 carries the pyrrolidone carboxylic acid modification. The residue at position 34 (Gly-34) is a Glycine amide.

It belongs to the GnRH family. Midbrain and hindbrain.

The protein localises to the secreted. Functionally, stimulates the secretion of gonadotropins. The polypeptide is Progonadoliberin-2 (gnrh2) (Aquarana catesbeiana (American bullfrog)).